The sequence spans 422 residues: Methylaspartate ammonia-lyase (422 aa).

Gln-175 contributes to the (2S,3S)-3-methyl-L-aspartate binding site. Mg(2+) is bound by residues Asp-239, Glu-276, and Asp-310. Gln-332 lines the (2S,3S)-3-methyl-L-aspartate pocket. The Proton acceptor role is filled by Lys-334. 363–364 (TC) contacts (2S,3S)-3-methyl-L-aspartate.

It belongs to the methylaspartate ammonia-lyase family. As to quaternary structure, homodimer. The cofactor is Mg(2+).

It catalyses the reaction (2S,3S)-3-methyl-L-aspartate = mesaconate + NH4(+). It functions in the pathway amino-acid degradation; L-glutamate degradation via mesaconate pathway; acetate and pyruvate from L-glutamate: step 2/4. Its function is as follows. Involved in the methylaspartate cycle. Catalyzes the formation of the alpha,beta-unsaturated bond by the reversible anti elimination of ammonia from L-threo-beta-methylaspartate (L-threo-(2S,3S)-3-methylaspartate) to give mesaconate. The protein is Methylaspartate ammonia-lyase (mal) of Haloarcula marismortui (strain ATCC 43049 / DSM 3752 / JCM 8966 / VKM B-1809) (Halobacterium marismortui).